Here is a 177-residue protein sequence, read N- to C-terminus: Protein SOB FIVE-LIKE 6 (177 aa).

Residues 14 to 19 (SGWTMY) carry the SOFL-A motif. Disordered regions lie at residues 37–60 (ETKQEHDEDSSMVSDASSGPPYYC) and 78–104 (KSKSKNKNKNKKKVHEEQGYSERFNSS). The SOFL-B motif lies at 47–56 (SMVSDASSGP). Residues 79-90 (SKSKNKNKNKKK) show a composition bias toward basic residues.

Belongs to the SOFL plant protein family. Expressed in seedlings, flowers and siliques. Barely detectable in roots and leaves.

The protein localises to the cytoplasm. Its subcellular location is the nucleus. Functionally, involved in cytokinin-mediated development. This is Protein SOB FIVE-LIKE 6 from Arabidopsis thaliana (Mouse-ear cress).